The chain runs to 495 residues: Glutamyl-tRNA(Gln) amidotransferase subunit A (495 aa).

Catalysis depends on charge relay system residues lysine 78 and serine 158. Serine 182 serves as the catalytic Acyl-ester intermediate.

This sequence belongs to the amidase family. GatA subfamily. As to quaternary structure, heterotrimer of A, B and C subunits.

It catalyses the reaction L-glutamyl-tRNA(Gln) + L-glutamine + ATP + H2O = L-glutaminyl-tRNA(Gln) + L-glutamate + ADP + phosphate + H(+). Its function is as follows. Allows the formation of correctly charged Gln-tRNA(Gln) through the transamidation of misacylated Glu-tRNA(Gln) in organisms which lack glutaminyl-tRNA synthetase. The reaction takes place in the presence of glutamine and ATP through an activated gamma-phospho-Glu-tRNA(Gln). The protein is Glutamyl-tRNA(Gln) amidotransferase subunit A of Ruegeria sp. (strain TM1040) (Silicibacter sp.).